Here is a 786-residue protein sequence, read N- to C-terminus: Myosin light chain kinase 3 (786 aa).

S155 carries the phosphoserine modification. Disordered stretches follow at residues 233 to 258, 279 to 315, and 333 to 443; these read EALDPGQEPPPTEAESRLPALASEDT, RMSQSAGEGTSSSKPDCSEPGPQPLGPLTTDSDIHSD, and ELFE…GRRV. Positions 279–293 are enriched in polar residues; the sequence is RMSQSAGEGTSSSKP. Residues S341 and S422 each carry the phosphoserine modification. Residues 482 to 737 enclose the Protein kinase domain; it reads VSQHEVLGGG…ATQCLKHEWL (256 aa). Residues 488 to 496 and K511 each bind ATP; that span reads LGGGRFGQV. The Proton acceptor role is filled by D603.

This sequence belongs to the protein kinase superfamily. CAMK Ser/Thr protein kinase family. Requires Mg(2+) as cofactor. In terms of processing, phosphorylated on serine residues. Expressed in cardiomyocytes (at protein level). Up-regulated in heart after experimental myocardial infarction at the mRNA level.

It localises to the cytoplasm. It catalyses the reaction L-seryl-[myosin light chain] + ATP = O-phospho-L-seryl-[myosin light chain] + ADP + H(+). The enzyme catalyses L-threonyl-[myosin light chain] + ATP = O-phospho-L-threonyl-[myosin light chain] + ADP + H(+). Functionally, calmodulin-dependent kinase that phosphorylates MYL2 in vitro. Promotes sarcomere formation in cardiomyocytes. Increases cardiomyocyte contractility. The polypeptide is Myosin light chain kinase 3 (Mylk3) (Rattus norvegicus (Rat)).